A 505-amino-acid chain; its full sequence is MGAKIQADEISSIIKERIDNFELNVDVNETGKIISYADGIAQVYGLKNVMAGEIVEFENGEKGLASNLEESSVGVVILGKGEGLREGTSCKRVGKLLETPVGEALVGRVVNALGEPIDGKGAIAATETRFVEEKAPGIMARKSVHEPLQTGIKAIDALVPIGRGQRELIIGDRQTGKTTVAIDTILNQKGENVICIYVAIGQKSSSIASVVRTLEESGAMDYTIVVNASAADSSALQFLAPYTGVTIGEYFRDNGKHALIIYDDLSKHAVAYREMSLILRRPPGREAYPGDVFYLHSRLLERAAKMSDERGAGSMTALPIIETQAGDVAAYIPTNVISITDGQIFLETNLFNSGIRPAINVGLSVSRVGGAAQIKATKQVAGTLKLSLAQYRELEAFAQFASDLDEATRRELELGQRMVEVLKQGVNKPLVIEKQIVIIYAGTKGYLNDIAVKDVVRFEAELHAFFEQKYSNILEAIKASQKIDDNTETQLKAALEEFKTVFNAN.

171–178 (GDRQTGKT) is a binding site for ATP.

It belongs to the ATPase alpha/beta chains family. As to quaternary structure, F-type ATPases have 2 components, CF(1) - the catalytic core - and CF(0) - the membrane proton channel. CF(1) has five subunits: alpha(3), beta(3), gamma(1), delta(1), epsilon(1). CF(0) has three main subunits: a(1), b(2) and c(9-12). The alpha and beta chains form an alternating ring which encloses part of the gamma chain. CF(1) is attached to CF(0) by a central stalk formed by the gamma and epsilon chains, while a peripheral stalk is formed by the delta and b chains.

It localises to the cell inner membrane. It catalyses the reaction ATP + H2O + 4 H(+)(in) = ADP + phosphate + 5 H(+)(out). Functionally, produces ATP from ADP in the presence of a proton gradient across the membrane. The alpha chain is a regulatory subunit. In Aliarcobacter butzleri (strain RM4018) (Arcobacter butzleri), this protein is ATP synthase subunit alpha.